The sequence spans 376 residues: Mitogen-activated protein kinase 4 (376 aa).

The Protein kinase domain occupies 43 to 329 (VPPLRPIGRG…VDEALCHPYL (287 aa)). ATP is bound by residues 49-57 (IGRGAYGIV) and lysine 72. Aspartate 169 functions as the Proton acceptor in the catalytic mechanism. Residue threonine 201 is modified to Phosphothreonine. A TXY motif is present at residues 201–203 (TEY). Residue tyrosine 203 is modified to Phosphotyrosine.

It belongs to the protein kinase superfamily. CMGC Ser/Thr protein kinase family. MAP kinase subfamily. As to quaternary structure, interacts with MEKK1, MKK1, MKK2 and MKK6. May form a ternary complex composed of MEKK1 and MKK1/MKK2 and MPK4. Interacts with MKS1 and AP2C1. May form a ternary or larger complex with MKS1 and WRKY25 and/or WRKY33. Interacts with MAP65-1. No interactions with RACK1A, RACK1B or RACK1C. Interacts directly with ASR3 and mediates its phosphorylation. Binds to MEKK2. Interacts with PAT1. Binds to HT1. Dually phosphorylated on Thr-201 and Tyr-203, which activates the enzyme. Autophosphorylated on serine and tyrosine residues. Dephosphorylated by DSPTP1. Phosphorylated by MKK6 in vitro. Ubiquitous. Expressed in the veins and stomatal guard cells of leaf plates, petioles, stem, roots and flowers.

Its subcellular location is the cytoplasm. The protein localises to the nucleus. It is found in the cytoskeleton. The enzyme catalyses L-seryl-[protein] + ATP = O-phospho-L-seryl-[protein] + ADP + H(+). The catalysed reaction is L-threonyl-[protein] + ATP = O-phospho-L-threonyl-[protein] + ADP + H(+). With respect to regulation, activated by threonine and tyrosine phosphorylation. Activated by the MAP kinase kinases MKK1 and MKK2. Activated in response to touch, wounding, low temperature, low humidity, salt stress and the bacterial elicitors flagellin and harpin. Activated upon Pseudomonas syringae pv. tomato DC3000 infection. Repressed by the protein phosphatase 2C AP2C1. Repressed by DSPTP1-mediated dephosphorylation. Activated by the MAP kinase kinase MKK6 in vitro. The ANPs-MKK6-MPK4 module is involved in the regulation of plant cytokinesis during meiosis and mitosis. Essential to promote the progression of cytokinesis and for cellularization (formation of the cell plate) during male-specific meiosis. Involved in cortical microtubules organization and stabilization by regulating the phosphorylation state of microtubule-associated proteins such as MAP65-1. Involved in root hair development process. Negative regulator of systemic acquired resistance (SAR) and salicylic acid- (SA) mediated defense response. Required for jasmonic acid- (JA) mediated defense gene expression. May regulate activity of transcription factor controlling pathogenesis-related (PR) gene expression. Seems to act independently of the SAR regulatory protein NPR1 (Nonexpresser of PR1). Phosphorylates MKS1 and transcription factors WRKY25 and WRKY33. The MEKK1, MKK1/MKK2 and MPK4 function in a signaling pathway that modulates the expression of genes responding to biotic and abiotic stresses and also plays an important role in pathogen defense by negatively regulating innate immunity. Phosphorylates MEKK2 upon treatment with flg22. Involved in stomatal movement regulation by repressing HT1 and HT1-mediated GHR1 phosphorylation. This chain is Mitogen-activated protein kinase 4, found in Arabidopsis thaliana (Mouse-ear cress).